The chain runs to 207 residues: Large ribosomal subunit protein uL4 (207 aa).

A disordered region spans residues 45-89 (RQGTHKVKTRSEVRGGGRKPWRQKGTGRARQGSIRSPQWRGGGTV). The segment covering 60–71 (GGRKPWRQKGTG) has biased composition (basic residues).

The protein belongs to the universal ribosomal protein uL4 family. In terms of assembly, part of the 50S ribosomal subunit.

In terms of biological role, one of the primary rRNA binding proteins, this protein initially binds near the 5'-end of the 23S rRNA. It is important during the early stages of 50S assembly. It makes multiple contacts with different domains of the 23S rRNA in the assembled 50S subunit and ribosome. Functionally, forms part of the polypeptide exit tunnel. The chain is Large ribosomal subunit protein uL4 from Bacillus anthracis (strain A0248).